The following is a 244-amino-acid chain: MTLRHHFELRETIATILADEELVIETACEGIRTARYELERYIIQDPFFNSSFEPLTITQGPDIIKNMAAAAWKAGVGPMAAVAGAIAHAGVSAAQKKGASFCIIDNGGDIAMITDRPVRVGLYAGNSPLSGKYAFFIPPKNEIYGICTSSATVGHSFSFGTADSVTVFSRDPLLADAVATAVCNVLTIADQSCLDRVDSHIDGIFAVFGEQSIIWGDIPQIIRAENRKDLITAGGLGFFPGTLI.

Belongs to the UPF0280 family.

The sequence is that of UPF0280 protein Mhun_0136 from Methanospirillum hungatei JF-1 (strain ATCC 27890 / DSM 864 / NBRC 100397 / JF-1).